The sequence spans 203 residues: uncharacterized protein (203 aa).

The chain crosses the membrane as a helical span at residues 180-200 (VYLLLFGIPLLILIFLIIFFI).

It is found in the virion. The protein resides in the host membrane. This is an uncharacterized protein from Acanthamoeba polyphaga (Amoeba).